The following is a 182-amino-acid chain: MTSFVRGGFVENRKFRINQFIKVPEVRLVDFDGTMIGVIKTADALAKAQAKDLDLVEISPQANPPVCRIINFSKFKYEMEKKEKEARKKQKIFHIKEVRIRPRISDHDLEVKIKHAREFIDGGDKVQLTALFSGREMQHKDLGIKIMERIKESLADIACPERKVYSMGMRVFLTLVPKNKIK.

Belongs to the IF-3 family. In terms of assembly, monomer.

The protein resides in the cytoplasm. Its function is as follows. IF-3 binds to the 30S ribosomal subunit and shifts the equilibrium between 70S ribosomes and their 50S and 30S subunits in favor of the free subunits, thus enhancing the availability of 30S subunits on which protein synthesis initiation begins. This chain is Translation initiation factor IF-3, found in Endomicrobium trichonymphae.